The following is a 379-amino-acid chain: Guanine nucleotide-binding protein G(s) subunit alpha (379 aa).

The interval M1–Q29 is disordered. G2 is lipidated: N-palmitoyl glycine. C3 is lipidated: S-palmitoyl cysteine. Residues A39–L379 enclose the G-alpha domain. Residues R42–T55 are G1 motif. GTP is bound by residues G47–S54, L183–T189, D208–Q212, N277–D280, and A351. Residues S54 and T189 each contribute to the Mg(2+) site. The G2 motif stretch occupies residues D181 to T189. The interval F204 to R213 is G3 motif. Residues I273 to D280 are G4 motif. A G5 motif region spans residues T349–T354.

Belongs to the G-alpha family. G(s) subfamily. In terms of assembly, g proteins are composed of 3 units; alpha, beta and gamma. The alpha chain contains the guanine nucleotide binding site.

Guanine nucleotide-binding proteins (G proteins) are involved as modulators or transducers in various transmembrane signaling systems. The G(s) protein is involved in hormonal regulation of adenylate cyclase: it activates the cyclase in response to beta-adrenergic stimuli. The protein is Guanine nucleotide-binding protein G(s) subunit alpha of Homarus americanus (American lobster).